The primary structure comprises 794 residues: Protein sel-1 homolog 1 (794 aa).

Residues 1-21 form the signal peptide; it reads MRVRIGLTLLLCAVLLSLASA. Residues 21 to 50 form a disordered region; sequence ASSDEEGSQDESLDSKTTLTSDESVKDHTT. The interaction with ERLEC1, OS9 and SYVN1 stretch occupies residues 22-737; that stretch reads SSDEEGSQDE…DMFTQLDMDQ (716 aa). The Lumenal portion of the chain corresponds to 22–738; sequence SSDEEGSQDE…MFTQLDMDQL (717 aa). The segment covering 23 to 32 has biased composition (acidic residues); it reads SDEEGSQDES. S63 carries the post-translational modification Phosphoserine. Residues 64-77 show a composition bias toward acidic residues; the sequence is EESELESSIQEEED. The segment at 64-109 is disordered; that stretch reads EESELESSIQEEEDSLKSQEGESVTEDISFLESPNPENKDYEEPKK. Residues 122-170 form the Fibronectin type-II domain; the sequence is AHGEPCHFPFLFLDKEYDECTSDGREDGRLWCATTYDYKADEKWGFCET. Cystine bridges form between C127–C153 and C141–C168. Sel1-like repeat units lie at residues 183-218, 219-254, 255-290, 291-326, 373-409, 410-446, 447-482, 483-518, and 519-554; these read AEMM…SMNH, TKAL…EEGS, PKGQ…LGGN, LIAH…NHVA, VQAQ…NAGN, SHAM…DMGN, PVGQ…EQGW, VDGQ…QGGH, and ILAF…ERGR. N-linked (GlcNAc...) asparagine glycosylation is found at N195 and N217. The N-linked (GlcNAc...) asparagine glycan is linked to N272. The important for homodimerization and oligomerization stretch occupies residues 352-537; the sequence is NSGMLEEDLI…MHASGTGVMR (186 aa). Residue N431 is glycosylated (N-linked (GlcNAc...) asparagine). A glycan (N-linked (GlcNAc...) asparagine) is linked at N608. Sel1-like repeat units lie at residues 627-662 and 664-699; these read TVAR…EQQH and AQAM…EASP. The interval 643-723 is interaction with SYVN1; the sequence is TDVDYETAFI…VVYFLQYIRE (81 aa). The mediates retention in the endoplasmic reticulum stretch occupies residues 738 to 794; it reads LLGPEWDLYLMTIIALLLGTVIAYRQRQHQDMPAPRPPGPRPAPPQQEGPPEQQPPQ. A helical transmembrane segment spans residues 739 to 759; sequence LGPEWDLYLMTIIALLLGTVI. Residues 760 to 794 lie on the Cytoplasmic side of the membrane; that stretch reads AYRQRQHQDMPAPRPPGPRPAPPQQEGPPEQQPPQ. The segment at 766–794 is disordered; it reads HQDMPAPRPPGPRPAPPQQEGPPEQQPPQ. Pro residues predominate over residues 771–794; the sequence is APRPPGPRPAPPQQEGPPEQQPPQ.

It belongs to the sel-1 family. Homodimer and homooligomer. May form a complex with ERLEC1, HSPA5, OS9, and SYVN1. Interacts with FOXRED2 and EDEM1. Interacts with LPL. Interacts with LMF1; may stabilize the complex formed by LPL and LMF1 and thereby promote the export of LPL dimers. Component of the HRD1 complex, which comprises at least SYNV1/HRD1, DERL1/2, FAM8A1, HERPUD1/HERP, OS9, SEL1L and UBE2J1. SYNV1 assembles with SEL1L and FAM8A1 through its transmembrane domains, but interaction with its cytoplasmic domain is required to confer stability to FAM8A1 and enhance recruitment of HERPUD1. The interaction with SYNV1/HRD1 is direct. As to quaternary structure, (Microbial infection) Interacts with human cytomegalovirus protein UL148. N-glycosylated. In terms of tissue distribution, highly expressed in pancreas.

It localises to the endoplasmic reticulum membrane. Functionally, plays a role in the endoplasmic reticulum quality control (ERQC) system also called ER-associated degradation (ERAD) involved in ubiquitin-dependent degradation of misfolded endoplasmic reticulum proteins. Enhances SYVN1 stability. Plays a role in LPL maturation and secretion. Required for normal differentiation of the pancreas epithelium, and for normal exocrine function and survival of pancreatic cells. May play a role in Notch signaling. In Homo sapiens (Human), this protein is Protein sel-1 homolog 1.